The sequence spans 352 residues: Probable protein phosphatase 2C 56 (352 aa).

Disordered stretches follow at residues 18-37 and 53-87; these read RGRR…ASRG and SSSS…ITGG. Composition is skewed to low complexity over residues 23-37 and 53-75; these read AASP…ASRG and SSSS…ARTR. In terms of domain architecture, PPM-type phosphatase spans 96 to 343; sequence SWDYSSFKGR…DNITCIVLQF (248 aa). Positions 132, 133, 295, and 334 each coordinate Mn(2+).

This sequence belongs to the PP2C family. The cofactor is Mg(2+). It depends on Mn(2+) as a cofactor.

The enzyme catalyses O-phospho-L-seryl-[protein] + H2O = L-seryl-[protein] + phosphate. It catalyses the reaction O-phospho-L-threonyl-[protein] + H2O = L-threonyl-[protein] + phosphate. In Oryza sativa subsp. japonica (Rice), this protein is Probable protein phosphatase 2C 56.